The following is a 249-amino-acid chain: Triosephosphate isomerase (249 aa).

9–11 (NWK) is a binding site for substrate. Catalysis depends on H95, which acts as the Electrophile. E165 (proton acceptor) is an active-site residue. Residues G171, S210, and 231 to 232 (GG) contribute to the substrate site.

Belongs to the triosephosphate isomerase family. In terms of assembly, homodimer.

The protein localises to the cytoplasm. It catalyses the reaction D-glyceraldehyde 3-phosphate = dihydroxyacetone phosphate. It participates in carbohydrate biosynthesis; gluconeogenesis. It functions in the pathway carbohydrate degradation; glycolysis; D-glyceraldehyde 3-phosphate from glycerone phosphate: step 1/1. In terms of biological role, involved in the gluconeogenesis. Catalyzes stereospecifically the conversion of dihydroxyacetone phosphate (DHAP) to D-glyceraldehyde-3-phosphate (G3P). This chain is Triosephosphate isomerase, found in Hyphomonas neptunium (strain ATCC 15444).